Here is a 118-residue protein sequence, read N- to C-terminus: Small ribosomal subunit protein uS13 (118 aa).

The segment at 94-118 is disordered; the sequence is SLPLRGQRTKTNARTRKGPRKPIRK.

This sequence belongs to the universal ribosomal protein uS13 family. Part of the 30S ribosomal subunit. Forms a loose heterodimer with protein S19. Forms two bridges to the 50S subunit in the 70S ribosome.

Functionally, located at the top of the head of the 30S subunit, it contacts several helices of the 16S rRNA. In the 70S ribosome it contacts the 23S rRNA (bridge B1a) and protein L5 of the 50S subunit (bridge B1b), connecting the 2 subunits; these bridges are implicated in subunit movement. Contacts the tRNAs in the A and P-sites. This Shewanella violacea (strain JCM 10179 / CIP 106290 / LMG 19151 / DSS12) protein is Small ribosomal subunit protein uS13.